The following is a 216-amino-acid chain: MVDITAAELKAAEAIFGDRLELAERYVEHLATSGTERGLIGPREVPRLWSRHVLNCAVIEREIARGSHVADVGSGAGLPGLCLAIARPDLELTLIEPLERRVIWLQEVVDDLGLTNVTVMRTRAELAVGMVNADVVTARAVSALSNLAGLTIPLLGGKGEVVAIKGRSAGEEIEKAAKAIRKLGGVQTSVVVVGEDLLEEPTTVVRIIVNKSQKIA.

Residues glycine 73, leucine 78, 124–125, and arginine 139 each bind S-adenosyl-L-methionine; that span reads AE.

Belongs to the methyltransferase superfamily. RNA methyltransferase RsmG family.

It localises to the cytoplasm. In terms of biological role, specifically methylates the N7 position of guanine in position 518 of 16S rRNA. The protein is Ribosomal RNA small subunit methyltransferase G of Arthrobacter sp. (strain FB24).